The sequence spans 252 residues: Phosphate import ATP-binding protein PstB 1 (252 aa).

In terms of domain architecture, ABC transporter spans 6-247 (LQIRDLSVYY…PKRKETEDYI (242 aa)). 38-45 (GPSGSGKS) is an ATP binding site.

This sequence belongs to the ABC transporter superfamily. Phosphate importer (TC 3.A.1.7) family. In terms of assembly, the complex is composed of two ATP-binding proteins (PstB), two transmembrane proteins (PstC and PstA) and a solute-binding protein (PstS).

It localises to the cell membrane. The catalysed reaction is phosphate(out) + ATP + H2O = ADP + 2 phosphate(in) + H(+). In terms of biological role, part of the ABC transporter complex PstSACB involved in phosphate import. Responsible for energy coupling to the transport system. The protein is Phosphate import ATP-binding protein PstB 1 of Streptococcus pyogenes serotype M6 (strain ATCC BAA-946 / MGAS10394).